The primary structure comprises 480 residues: MKVLHACSELYPLLKTGGLADVMGALPFAQKEIGIDARIVLPAYPAIKAGIPETTVVSEFDNFAGHIVLRYGEYKGLGVYLIDAPHLYQREGNPYHDQWYNDYADNYKRFALLGWVAAELATGLDSWWHADVVHAHDWHAGLASAYLFNKGRPAKSVFTIHNLAYQGQFAYHHLVEIGLPAGMFHVDGLELHGQISYLKAGLYYSDAVTAVSPTYAKEITTPEFGYGLQGLLTTLNSQGKLVGILNGVDDQIWHPNHDAYIEHHYKLKAMTGKRKNKEALQAYFNLPQDPDALLFVMVTRLTEQKGVDLLIDSAEEIVKQGGQLTILGSGSPHLEAGILHLAQQYPHQIAVKIGYDEALSHLMIAGGDVILVPSRFEPCGLTQLYGLKYGTLPLVRATGGLADTVVNATVENIKSRLATGFVFEQANREALRQALVNAFALWQKQRLWFTVRSVAMEQDFSWQISATGYHALYQRLLSFN.

Lysine 15 is an ADP-alpha-D-glucose binding site.

It belongs to the glycosyltransferase 1 family. Bacterial/plant glycogen synthase subfamily.

It catalyses the reaction [(1-&gt;4)-alpha-D-glucosyl](n) + ADP-alpha-D-glucose = [(1-&gt;4)-alpha-D-glucosyl](n+1) + ADP + H(+). It participates in glycan biosynthesis; glycogen biosynthesis. In terms of biological role, synthesizes alpha-1,4-glucan chains using ADP-glucose. In Pasteurella multocida (strain Pm70), this protein is Glycogen synthase.